The following is a 168-amino-acid chain: HTH-type transcriptional regulator IscR (168 aa).

One can recognise an HTH rrf2-type domain in the interval 2–131 (KLTSKGRYAV…NNITLGELMK (130 aa)). The H-T-H motif DNA-binding region spans 28–51 (LADISERQGISLSYLEQLFSKLRK). Residues Cys92, Cys98, and Cys104 each contribute to the [2Fe-2S] cluster site.

[2Fe-2S] cluster is required as a cofactor.

Functionally, regulates the transcription of several operons and genes involved in the biogenesis of Fe-S clusters and Fe-S-containing proteins. In Vibrio campbellii (strain ATCC BAA-1116), this protein is HTH-type transcriptional regulator IscR.